The following is a 180-amino-acid chain: Urease accessory protein UreE (180 aa).

The disordered stretch occupies residues 71-90; that stretch reads AAPSGAGHGDGEQDGTGAPG.

The protein belongs to the UreE family.

The protein resides in the cytoplasm. Involved in urease metallocenter assembly. Binds nickel. Probably functions as a nickel donor during metallocenter assembly. The chain is Urease accessory protein UreE from Kocuria rhizophila (strain ATCC 9341 / DSM 348 / NBRC 103217 / DC2201).